We begin with the raw amino-acid sequence, 511 residues long: Histidine ammonia-lyase (511 aa).

Residues 142–144 (ASG) constitute a cross-link (5-imidazolinone (Ala-Gly)). 2,3-didehydroalanine (Ser) is present on serine 143.

This sequence belongs to the PAL/histidase family. Contains an active site 4-methylidene-imidazol-5-one (MIO), which is formed autocatalytically by cyclization and dehydration of residues Ala-Ser-Gly.

It is found in the cytoplasm. The enzyme catalyses L-histidine = trans-urocanate + NH4(+). It participates in amino-acid degradation; L-histidine degradation into L-glutamate; N-formimidoyl-L-glutamate from L-histidine: step 1/3. The polypeptide is Histidine ammonia-lyase (Brucella suis (strain ATCC 23445 / NCTC 10510)).